We begin with the raw amino-acid sequence, 463 residues long: V-type proton ATPase subunit S1 (463 aa).

The first 32 residues, 1 to 32 (MMAATVVSRIRTGTGRAPVMWLSLSLVAVAAA), serve as a signal peptide directing secretion. The propeptide occupies 33 to 225 (VATEQQVPLV…TAVRPSRVAR (193 aa)). Residues 33-412 (VATEQQVPLV…EQFSYASDCA (380 aa)) lie on the Lumenal side of the membrane. Residues Asn-164, Asn-255, Asn-267, Asn-290, Asn-297, Asn-344, Asn-351, and Asn-399 are each glycosylated (N-linked (GlcNAc...) asparagine). A disulfide bridge links Cys-365 with Cys-411. A helical membrane pass occupies residues 413–433 (GFFSPGIWMGLLTTLFMLFIF). Residues 434–463 (TYGLHMILSLKTMDRFDDHKGPTITLTQIV) lie on the Cytoplasmic side of the membrane.

It belongs to the vacuolar ATPase subunit S1 family. In terms of assembly, accessory component of the multisubunit proton-transporting vacuolar (V)-ATPase protein pump. Interacts (via N-terminus) with ATP6AP2 (via N-terminus). Interacts with RNASEK. Interacts with TMEM106B (via C-terminus). N-glycosylated. Expressed in brain cortex (at protein level). Highly expressed in islets of Langerhans. Expressed in pancreatic acini, pituitary gland, adrenal gland, lung, brain and bone marrow.

It is found in the endoplasmic reticulum membrane. Its subcellular location is the endoplasmic reticulum-Golgi intermediate compartment membrane. It localises to the cytoplasmic vesicle. The protein resides in the secretory vesicle. The protein localises to the synaptic vesicle membrane. It is found in the clathrin-coated vesicle membrane. In terms of biological role, accessory subunit of the proton-transporting vacuolar (V)-ATPase protein pump, which is required for luminal acidification of secretory vesicles. Guides the V-type ATPase into specialized subcellular compartments, such as neuroendocrine regulated secretory vesicles or the ruffled border of the osteoclast, thereby regulating its activity. Involved in membrane trafficking and Ca(2+)-dependent membrane fusion. May play a role in the assembly of the V-type ATPase complex. In aerobic conditions, involved in intracellular iron homeostasis, thus triggering the activity of Fe(2+) prolyl hydroxylase (PHD) enzymes, and leading to HIF1A hydroxylation and subsequent proteasomal degradation. In islets of Langerhans cells, may regulate the acidification of dense-core secretory granules. In Mus musculus (Mouse), this protein is V-type proton ATPase subunit S1 (Atp6ap1).